A 285-amino-acid polypeptide reads, in one-letter code: Foldase protein PrsA 2 (285 aa).

The signal sequence occupies residues 1–20; sequence MRGKHIFIITALISILMLAA. A lipid anchor (N-palmitoyl cysteine) is attached at Cys21. Cys21 carries the S-diacylglycerol cysteine lipid modification. Residues 134–224 form the PpiC domain; the sequence is KPEIKASHIL…NGYHIIKLTG (91 aa).

It belongs to the PrsA family.

The protein resides in the cell membrane. It carries out the reaction [protein]-peptidylproline (omega=180) = [protein]-peptidylproline (omega=0). In terms of biological role, plays a major role in protein secretion by helping the post-translocational extracellular folding of several secreted proteins. Important for the secretion of the protective antigen. The three PsrA proteins in this organism show different but overlapping substrate specificities. This is Foldase protein PrsA 2 (prsA2) from Bacillus anthracis.